The sequence spans 83 residues: RNA-binding protein Hfq (83 aa).

A Sm domain is found at 11-71 (DTFLNHVRKN…ISTIMPGHPV (61 aa)).

It belongs to the Hfq family. Homohexamer.

Its function is as follows. RNA chaperone that binds small regulatory RNA (sRNAs) and mRNAs to facilitate mRNA translational regulation in response to envelope stress, environmental stress and changes in metabolite concentrations. Also binds with high specificity to tRNAs. The protein is RNA-binding protein Hfq of Methylobacterium radiotolerans (strain ATCC 27329 / DSM 1819 / JCM 2831 / NBRC 15690 / NCIMB 10815 / 0-1).